Here is a 515-residue protein sequence, read N- to C-terminus: Maturase K (515 aa).

Belongs to the intron maturase 2 family. MatK subfamily.

The protein localises to the plastid. The protein resides in the chloroplast. Usually encoded in the trnK tRNA gene intron. Probably assists in splicing its own and other chloroplast group II introns. The sequence is that of Maturase K from Cedrus atlantica (Atlas cedar).